We begin with the raw amino-acid sequence, 397 residues long: MTNAIDELQAIIAELKTEVEEQRAVIRQSRDRIEHMSAEVVDSNPYSRLMALQRMNIVKNYERIRDKTVAIVGVGGVGSVTADMLTRCGIGKLILFDYDKVELANMNRLFFTPDQAGLSKVEAAARTLTFINPDVRIETHNYNITTIDNFDNFLSTITGDGTVAGEPVDLVLSCVDNFEARMAINAACNEKCLNWFESGVSENAVSGHIQFLRPGDTACFACAPPLVVAENIDEKTLKREGVCAASLPTTMGITAGFLVQNALKYLLNFGEVSDYLGYNALNDFFPKMTLKPNPQCDDRNCLLRQKEFQARPKPVVVQEEAPTDEPLHASNDWGIELVAEDAPSDAPTDLSQSTDVGQGLRLAYEAPEKSSAEATQAATAPVDDTSLEDLMAQMKSM.

ATP is bound by residues Gly76, Asp97, Lys120, Asn143, and Asn177. Residues Cys219 and Cys222 each contribute to the Zn(2+) site. Cys243 serves as the catalytic Glycyl thioester intermediate. Residues Cys296 and Cys301 each coordinate Zn(2+). Residues 343-384 (PSDAPTDLSQSTDVGQGLRLAYEAPEKSSAEATQAATAPVDD) form a disordered region.

This sequence belongs to the ubiquitin-activating E1 family. UBA5 subfamily.

E1-like enzyme which activates UFM1. The polypeptide is Ubiquitin-like modifier-activating enzyme 5 (Drosophila pseudoobscura pseudoobscura (Fruit fly)).